Here is a 57-residue protein sequence, read N- to C-terminus: MAVPKKRTSMSKKRIRRNIWKKKGYWAAVKALSLAKSISTGHSKSFFVRQTSNKALE.

The protein belongs to the bacterial ribosomal protein bL32 family.

Its subcellular location is the plastid. The protein localises to the chloroplast. The protein is Large ribosomal subunit protein bL32c of Liriodendron tulipifera (Tuliptree).